The primary structure comprises 361 residues: Chorismate synthase (361 aa).

R48 and R54 together coordinate NADP(+). FMN is bound by residues 125-127, 238-239, G278, 293-297, and R319; these read RSS, NA, and KPTSS.

It belongs to the chorismate synthase family. In terms of assembly, homotetramer. It depends on FMNH2 as a cofactor.

The enzyme catalyses 5-O-(1-carboxyvinyl)-3-phosphoshikimate = chorismate + phosphate. It participates in metabolic intermediate biosynthesis; chorismate biosynthesis; chorismate from D-erythrose 4-phosphate and phosphoenolpyruvate: step 7/7. Catalyzes the anti-1,4-elimination of the C-3 phosphate and the C-6 proR hydrogen from 5-enolpyruvylshikimate-3-phosphate (EPSP) to yield chorismate, which is the branch point compound that serves as the starting substrate for the three terminal pathways of aromatic amino acid biosynthesis. This reaction introduces a second double bond into the aromatic ring system. The sequence is that of Chorismate synthase from Salmonella paratyphi A (strain ATCC 9150 / SARB42).